The primary structure comprises 510 residues: NAD(P)H-quinone oxidoreductase subunit 2 A, chloroplastic (510 aa).

12 helical membrane passes run 24–44 (LLLF…GLIL), 59–79 (WFYF…LFRW), 99–119 (IFQF…VEYI), 124–144 (MAIT…MFLC), 149–169 (LITL…LSGY), 183–203 (YLLM…WLYG), 229–249 (ISIA…PAPF), 295–315 (WHLL…LIAI), 323–343 (MLAY…IVGD), 354–374 (YMLF…SFGL), 395–415 (ALSL…AGFF), and 418–438 (LHLF…IGLL).

Belongs to the complex I subunit 2 family. In terms of assembly, NDH is composed of at least 16 different subunits, 5 of which are encoded in the nucleus.

It localises to the plastid. The protein localises to the chloroplast thylakoid membrane. It carries out the reaction a plastoquinone + NADH + (n+1) H(+)(in) = a plastoquinol + NAD(+) + n H(+)(out). The catalysed reaction is a plastoquinone + NADPH + (n+1) H(+)(in) = a plastoquinol + NADP(+) + n H(+)(out). NDH shuttles electrons from NAD(P)H:plastoquinone, via FMN and iron-sulfur (Fe-S) centers, to quinones in the photosynthetic chain and possibly in a chloroplast respiratory chain. The immediate electron acceptor for the enzyme in this species is believed to be plastoquinone. Couples the redox reaction to proton translocation, and thus conserves the redox energy in a proton gradient. This chain is NAD(P)H-quinone oxidoreductase subunit 2 A, chloroplastic, found in Dioscorea elephantipes (Elephant's foot yam).